A 312-amino-acid chain; its full sequence is Malate dehydrogenase (312 aa).

Residues 12-17 (GAGFTG) and aspartate 36 each bind NAD(+). Substrate-binding residues include arginine 87 and arginine 93. NAD(+)-binding positions include asparagine 100 and 123 to 125 (LTN). Asparagine 125 is a binding site for substrate. Serine 149 bears the Phosphoserine mark. Arginine 156 is a binding site for substrate. Histidine 180 functions as the Proton acceptor in the catalytic mechanism.

The protein belongs to the LDH/MDH superfamily. MDH type 3 family.

The enzyme catalyses (S)-malate + NAD(+) = oxaloacetate + NADH + H(+). Catalyzes the reversible oxidation of malate to oxaloacetate. This is Malate dehydrogenase from Bacillus mycoides (strain KBAB4) (Bacillus weihenstephanensis).